A 129-amino-acid chain; its full sequence is NADH-quinone oxidoreductase subunit A (129 aa).

3 helical membrane-spanning segments follow: residues 9–29, 68–88, and 97–117; these read FPIG…LGLA, LLFI…VLLL, and LGWP…AGLV.

It belongs to the complex I subunit 3 family. In terms of assembly, NDH-1 is composed of 14 different subunits. Subunits NuoA, H, J, K, L, M, N constitute the membrane sector of the complex.

The protein resides in the cell inner membrane. The catalysed reaction is a quinone + NADH + 5 H(+)(in) = a quinol + NAD(+) + 4 H(+)(out). In terms of biological role, NDH-1 shuttles electrons from NADH, via FMN and iron-sulfur (Fe-S) centers, to quinones in the respiratory chain. The immediate electron acceptor for the enzyme in this species is believed to be ubiquinone. Couples the redox reaction to proton translocation (for every two electrons transferred, four hydrogen ions are translocated across the cytoplasmic membrane), and thus conserves the redox energy in a proton gradient. The chain is NADH-quinone oxidoreductase subunit A from Anaeromyxobacter dehalogenans (strain 2CP-C).